A 176-amino-acid polypeptide reads, in one-letter code: Woronin body major protein (176 aa).

The propeptide occupies 1 to 16; the sequence is MGYYDDDAHGHVEADA. Residues 1–16 are compositionally biased toward basic and acidic residues; that stretch reads MGYYDDDAHGHVEADA. The tract at residues 1–31 is disordered; sequence MGYYDDDAHGHVEADAAPRATTGTGTGSASQ. The Microbody targeting signal motif lies at 174 to 176; it reads SRL.

The protein belongs to the eIF-5A family. Hex1 subfamily. In terms of assembly, forms oligomers. Self-assembles into hexagonal rods.

Its subcellular location is the cell septum. Functionally, major component of Woronin bodies, fungal-specific organelles that occlude septal pores in order to separate intact from damaged compartments. Hex-1 binds directly or indirectly to the Woronin body tether that in turn is anchored at the rim of the septal pore. This chain is Woronin body major protein, found in Neurospora crassa (strain ATCC 24698 / 74-OR23-1A / CBS 708.71 / DSM 1257 / FGSC 987).